A 279-amino-acid polypeptide reads, in one-letter code: Reaction center protein L chain (279 aa).

3 helical membrane passes run 33 to 56, 85 to 113, and 116 to 141; these read GFFG…GASQ, GLWQ…RKLG, and YHVP…ILMG. Residues H154 and H174 each coordinate (7R,8Z)-bacteriochlorophyll b. A helical transmembrane segment spans residues 171–200; sequence NPAHMLAITFFFTTTLAMSMHGGLILSAAN. H191 contacts Fe cation. F217 lines the a ubiquinone pocket. A helical transmembrane segment spans residues 226-252; the sequence is GSLGIHRLGLFLALSAAFWSAVCIVIS. Residue H231 coordinates Fe cation.

Belongs to the reaction center PufL/M/PsbA/D family. In terms of assembly, reaction center is composed of four bacteriochlorophylls, two bacteriopheophytins, two ubiquinones, one iron, and three highly hydrophobic polypeptide chains (designated L, M, and H).

The protein resides in the cell inner membrane. The reaction center is a membrane-bound complex that mediates the initial photochemical event in the electron transfer process of photosynthesis. This Rubrivivax gelatinosus (Rhodocyclus gelatinosus) protein is Reaction center protein L chain (pufL).